The sequence spans 1002 residues: Collagen alpha-2(I) chain (1002 aa).

Residues 1-1002 (SGGFDFSFLP…PGPPGPPGAS (1002 aa)) are disordered. Residues Pro-10, Pro-13, Pro-28, and Pro-34 each carry the 4-hydroxyproline modification. The span at 17–60 (GPMGLMGPRGPPGASGAPGPQGFQGPAGEPGEPGQTGPAGARGP) shows a compositional bias: low complexity. At Lys-89 the chain carries 5-hydroxylysine; alternate. A glycan (O-linked (Gal...) hydroxylysine; alternate) is linked at Lys-89. Composition is skewed to low complexity over residues 145-166 (SRGS…SAGP) and 211-232 (PGAN…AGAP). The segment covering 266–275 (GESGGKGEPG) has biased composition (gly residues). Residues 276–286 (SAGPQGPPGSS) show a composition bias toward low complexity. Over residues 308–317 (GLRGGPGSRG) the composition is skewed to gly residues. Residues 330 to 346 (PAGARGASGPAGVRGPS) are compositionally biased toward low complexity. Residues Pro-352 and Pro-355 each carry the 4-hydroxyproline modification. A compositionally biased stretch (low complexity) spans 381–400 (LPGIDGRPGPIGPAGARGEA). A compositionally biased stretch (gly residues) spans 449 to 458 (GVQGGKGEQG). Low complexity-rich tracts occupy residues 505-522 (PGES…SRGP) and 534-544 (EPGVVGAPGTA). Gly residues predominate over residues 545–554 (GPAGSGGLPG). 2 stretches are compositionally biased toward low complexity: residues 577 to 621 (VGTT…PRGS) and 628 to 648 (VGPA…QPGA). Positions 649–658 (KGERGTKGPK) are enriched in basic and acidic residues. A compositionally biased stretch (low complexity) spans 666-676 (PTGPVGSAGPA). Over residues 686-695 (GSRGDGGPPG) the composition is skewed to gly residues. Residues 697–706 (TGFPGAAGRT) are compositionally biased toward low complexity. A compositionally biased stretch (gly residues) spans 743 to 752 (GETGAGGPPG). Composition is skewed to low complexity over residues 760 to 787 (SGEP…LGLP) and 795 to 805 (LPGVAGAVGEP). Gly residues predominate over residues 806–828 (GPLGIGPPGARGPSGGVGPGVNG). Residues 833 to 851 (AGRDGPPGRDGLPGHKGER) are compositionally biased toward basic and acidic residues. Positions 853-898 (YAGNAGPVGAAGAPGPHGAVGPAGKHGNRGEPGPVGSAGPVGALGP) are enriched in low complexity. Over residues 908 to 919 (RGDKGEAGDKGP) the composition is skewed to basic and acidic residues. Over residues 987–1002 (SGPPGPPGPPGPPGAS) the composition is skewed to pro residues.

Belongs to the fibrillar collagen family. As to quaternary structure, trimers of one alpha 2(I) and two alpha 1(I) chains. Interacts (via C-terminus) with TMEM131 (via PapD-L domain); the interaction is direct and is involved in assembly and TRAPPIII ER-to-Golgi transport complex-dependent secretion of collagen. In terms of processing, prolines at the third position of the tripeptide repeating unit (G-X-Y) are hydroxylated in some or all of the chains. As to expression, expressed in bones.

The protein resides in the secreted. The protein localises to the extracellular space. Its subcellular location is the extracellular matrix. Type I collagen is a member of group I collagen (fibrillar forming collagen). The sequence is that of Collagen alpha-2(I) chain from Glossotherium robustum (Ground sloth).